The primary structure comprises 257 residues: Zinc import ATP-binding protein ZnuC (257 aa).

Residues 5–220 (VELQSVTVTF…PSYVALFGQQ (216 aa)) form the ABC transporter domain. ATP is bound at residue 37-44 (GPNGAGKS). Residues 234-257 (HEHDLAGSPVGPCQHNKQHGHDNA) form a disordered region.

This sequence belongs to the ABC transporter superfamily. Zinc importer (TC 3.A.1.15.5) family. The complex is composed of two ATP-binding proteins (ZnuC), two transmembrane proteins (ZnuB) and a solute-binding protein (ZnuA).

Its subcellular location is the cell inner membrane. It carries out the reaction Zn(2+)(out) + ATP(in) + H2O(in) = Zn(2+)(in) + ADP(in) + phosphate(in) + H(+)(in). Functionally, part of the ABC transporter complex ZnuABC involved in zinc import. Responsible for energy coupling to the transport system. In Photobacterium profundum (strain SS9), this protein is Zinc import ATP-binding protein ZnuC.